Here is a 208-residue protein sequence, read N- to C-terminus: MFALSARHALRRTRIFAIPRFFADSRQDSDNPDKRYSGPAATMDNKSEKVTVNKEELRKRLTPVQYQVTQEAGTERPFTGCYNKHYEKGVYQCIVCHQDLFSSETKYDSGCGWPAFNDVLDKGKVTLHRDASIPGGNILLLIAHPERIRTEVRCARCNAHMGHVFEDGPKPTRKRYCINSASIEFVNADPATSSPPVATPTAAPIAQQ.

The segment covering 27–36 (QDSDNPDKRY) has biased composition (basic and acidic residues). The interval 27 to 48 (QDSDNPDKRYSGPAATMDNKSE) is disordered. The MsrB domain occupies 54–188 (KEELRKRLTP…NSASIEFVNA (135 aa)). 4 residues coordinate Zn(2+): cysteine 93, cysteine 96, cysteine 154, and cysteine 157. A disulfide bridge links cysteine 111 with cysteine 177. The active-site Nucleophile is cysteine 177. Residues 189-208 (DPATSSPPVATPTAAPIAQQ) form a disordered region.

Belongs to the MsrB Met sulfoxide reductase family. Zn(2+) serves as cofactor. In terms of tissue distribution, present in the embryonic nervous system (brain and cord) in neuronal cell bodies, along axons. Also present in embryonic muscles in motor axons. Localizes to growing bristle tips where it is distributed in small puntae. Present at and at sites of actin localization.

It is found in the cytoplasm. The protein localises to the nucleus. The protein resides in the cytoskeleton. The catalysed reaction is L-methionyl-[protein] + [thioredoxin]-disulfide + H2O = L-methionyl-(R)-S-oxide-[protein] + [thioredoxin]-dithiol. Functionally, methionine-sulfoxide reductase that specifically reduces methionine (R)-sulfoxide back to methionine. While in many cases methionine oxidation is the result of random oxidation following oxidative stress, methionine oxidation is also a post-translational modification that takes place on specific residues. Acts as a regulator of actin assembly by reducing methionine (R)-sulfoxide mediated by Mical on actin thereby promoting filament repolymerization. The chain is Methionine-R-sulfoxide reductase B1 (SelR) from Drosophila melanogaster (Fruit fly).